The chain runs to 371 residues: Glutamate 5-kinase (371 aa).

Lys-10 provides a ligand contact to ATP. Substrate-binding residues include Ser-50, Asp-137, and Asn-149. Residues 169–170 (SD) and 208–214 (TGGMFTK) each bind ATP. In terms of domain architecture, PUA spans 274-352 (EGRIYIDDGA…EEIRNILGED (79 aa)).

This sequence belongs to the glutamate 5-kinase family.

It is found in the cytoplasm. The catalysed reaction is L-glutamate + ATP = L-glutamyl 5-phosphate + ADP. Its pathway is amino-acid biosynthesis; L-proline biosynthesis; L-glutamate 5-semialdehyde from L-glutamate: step 1/2. Functionally, catalyzes the transfer of a phosphate group to glutamate to form L-glutamate 5-phosphate. The polypeptide is Glutamate 5-kinase (Dictyoglomus turgidum (strain DSM 6724 / Z-1310)).